The following is a 375-amino-acid chain: Enoyl-[acyl-carrier-protein] reductase [NADH] 1, chloroplastic (375 aa).

Residues 1-67 (MGASAATGMQ…SSKRSGVAIR (67 aa)) constitute a chloroplast transit peptide. NAD(+) is bound by residues glycine 91, tyrosine 98, 155 to 156 (DA), 202 to 203 (SL), and leucine 252. Catalysis depends on proton acceptor residues tyrosine 254 and tyrosine 264. NAD(+) contacts are provided by residues lysine 272 and 302 to 306 (LGSRA).

Belongs to the short-chain dehydrogenases/reductases (SDR) family. FabI subfamily. Homotetramer.

Its subcellular location is the plastid. The protein localises to the chloroplast. It carries out the reaction a 2,3-saturated acyl-[ACP] + NAD(+) = a (2E)-enoyl-[ACP] + NADH + H(+). It participates in lipid metabolism; fatty acid biosynthesis. Catalyzes the NAD-dependent reduction of a carbon-carbon double bond in an enoyl moiety that is covalently linked to an acyl carrier protein (ACP). Catalyzes the last reduction step in the de novo synthesis cycle of fatty acids. Involved in the elongation cycle of fatty acids which are used in lipid metabolism. Required for normal plant growth. This chain is Enoyl-[acyl-carrier-protein] reductase [NADH] 1, chloroplastic, found in Oryza sativa subsp. japonica (Rice).